The chain runs to 55 residues: uncharacterized protein (55 aa).

Residues 17–44 adopt a coiled-coil conformation; it reads QNVNIALTKKRLDTAQQNADQTLKMIQH.

This is an uncharacterized protein from Bacillus subtilis (strain 168).